The chain runs to 357 residues: tRNA-specific 2-thiouridylase MnmA (357 aa).

ATP is bound by residues 10-17 (GISGGVDS) and I36. The Nucleophile role is filled by C98. Residues C98 and C194 are joined by a disulfide bond. Residue G122 participates in ATP binding. Positions 144–146 (KDQ) are interaction with tRNA. Catalysis depends on C194, which acts as the Cysteine persulfide intermediate. The interaction with tRNA stretch occupies residues 303–304 (RY).

The protein belongs to the MnmA/TRMU family.

The protein localises to the cytoplasm. The catalysed reaction is S-sulfanyl-L-cysteinyl-[protein] + uridine(34) in tRNA + AH2 + ATP = 2-thiouridine(34) in tRNA + L-cysteinyl-[protein] + A + AMP + diphosphate + H(+). Functionally, catalyzes the 2-thiolation of uridine at the wobble position (U34) of tRNA, leading to the formation of s(2)U34. The chain is tRNA-specific 2-thiouridylase MnmA from Chlorobium phaeovibrioides (strain DSM 265 / 1930) (Prosthecochloris vibrioformis (strain DSM 265)).